Reading from the N-terminus, the 485-residue chain is NADH-quinone oxidoreductase subunit N (485 aa).

The next 14 helical transmembrane spans lie at 10–30, 35–55, 75–95, 104–124, 125–145, 159–179, 203–223, 235–255, 271–291, 297–317, 327–347, 374–394, 408–427, and 449–469; these read AMLP…SIAW, FINA…LYFV, FYIG…YPWL, EFYL…SANH, LASL…LIGY, YMLL…LLYA, ILAG…LVPF, PAPV…AVVM, LVLS…AISQ, LLGY…VAVQ, GVYL…VSLM, AVMT…GFIG, WWLT…YYLR, and ALTA…VLGI.

The protein belongs to the complex I subunit 2 family. As to quaternary structure, NDH-1 is composed of 13 different subunits. Subunits NuoA, H, J, K, L, M, N constitute the membrane sector of the complex.

It is found in the cell inner membrane. The catalysed reaction is a quinone + NADH + 5 H(+)(in) = a quinol + NAD(+) + 4 H(+)(out). In terms of biological role, NDH-1 shuttles electrons from NADH, via FMN and iron-sulfur (Fe-S) centers, to quinones in the respiratory chain. The immediate electron acceptor for the enzyme in this species is believed to be ubiquinone. Couples the redox reaction to proton translocation (for every two electrons transferred, four hydrogen ions are translocated across the cytoplasmic membrane), and thus conserves the redox energy in a proton gradient. In Yersinia enterocolitica serotype O:8 / biotype 1B (strain NCTC 13174 / 8081), this protein is NADH-quinone oxidoreductase subunit N.